Here is a 383-residue protein sequence, read N- to C-terminus: Acetylornithine deacetylase (383 aa).

H80 provides a ligand contact to Zn(2+). D82 is a catalytic residue. D112 lines the Zn(2+) pocket. Residue E144 is part of the active site. Residues E145, E169, and H355 each coordinate Zn(2+).

Belongs to the peptidase M20A family. ArgE subfamily. Homodimer. Zn(2+) is required as a cofactor. Requires Co(2+) as cofactor. Glutathione serves as cofactor.

It is found in the cytoplasm. It catalyses the reaction N(2)-acetyl-L-ornithine + H2O = L-ornithine + acetate. It functions in the pathway amino-acid biosynthesis; L-arginine biosynthesis; L-ornithine from N(2)-acetyl-L-ornithine (linear): step 1/1. Catalyzes the hydrolysis of the amide bond of N(2)-acetylated L-amino acids. Cleaves the acetyl group from N-acetyl-L-ornithine to form L-ornithine, an intermediate in L-arginine biosynthesis pathway, and a branchpoint in the synthesis of polyamines. This chain is Acetylornithine deacetylase, found in Pectobacterium carotovorum subsp. carotovorum (strain PC1).